Consider the following 248-residue polypeptide: Probable phosphatase VFMJ11_A0899 (248 aa).

Positions 8, 10, 16, 41, 74, 101, 131, 193, and 195 each coordinate Zn(2+).

This sequence belongs to the PHP family. Zn(2+) serves as cofactor.

The sequence is that of Probable phosphatase VFMJ11_A0899 from Aliivibrio fischeri (strain MJ11) (Vibrio fischeri).